We begin with the raw amino-acid sequence, 258 residues long: Imidazole glycerol phosphate synthase subunit HisF (258 aa).

Active-site residues include aspartate 11 and aspartate 130.

Belongs to the HisA/HisF family. As to quaternary structure, heterodimer of HisH and HisF.

The protein localises to the cytoplasm. It carries out the reaction 5-[(5-phospho-1-deoxy-D-ribulos-1-ylimino)methylamino]-1-(5-phospho-beta-D-ribosyl)imidazole-4-carboxamide + L-glutamine = D-erythro-1-(imidazol-4-yl)glycerol 3-phosphate + 5-amino-1-(5-phospho-beta-D-ribosyl)imidazole-4-carboxamide + L-glutamate + H(+). The protein operates within amino-acid biosynthesis; L-histidine biosynthesis; L-histidine from 5-phospho-alpha-D-ribose 1-diphosphate: step 5/9. In terms of biological role, IGPS catalyzes the conversion of PRFAR and glutamine to IGP, AICAR and glutamate. The HisF subunit catalyzes the cyclization activity that produces IGP and AICAR from PRFAR using the ammonia provided by the HisH subunit. In Shigella dysenteriae serotype 1 (strain Sd197), this protein is Imidazole glycerol phosphate synthase subunit HisF.